The sequence spans 211 residues: MCPGNWLWASMTFMARFSRSSSRSPVRTRGTLEEMPTVQHPFLNVFELERLLYTGKTACNHADEVWPGLYLGDQDMANNRRELRRLGITHVLNASHSRWRGTPEAYEGLGIRYLGVEAHDSPAFDMSIHFQTAADFIHRALSQPGGKILVHCAVGVSRSATLVLAYLMLYHHLTLVEAIKKVKDHRGIIPNRGFLRQLLALDRRLRQGLEA.

In terms of domain architecture, Tyrosine-protein phosphatase spans 60–207; the sequence is NHADEVWPGL…LLALDRRLRQ (148 aa). Cys152 acts as the Phosphocysteine intermediate in catalysis.

The protein belongs to the protein-tyrosine phosphatase family. Non-receptor class dual specificity subfamily. As to quaternary structure, interacts with HSF4. Brain. In the brain it is expressed ubiquitously except in the hippocampus. Expressed in embryonal cancers (retinoblastoma, neuroepithilioma and neuroblastoma) and in anaplatic thyroid cancer.

Its subcellular location is the cytoplasm. The protein resides in the nucleus. The protein localises to the golgi apparatus. It carries out the reaction O-phospho-L-tyrosyl-[protein] + H2O = L-tyrosyl-[protein] + phosphate. The catalysed reaction is O-phospho-L-seryl-[protein] + H2O = L-seryl-[protein] + phosphate. The enzyme catalyses O-phospho-L-threonyl-[protein] + H2O = L-threonyl-[protein] + phosphate. Inactivates MAPK1 and MAPK3 which leads to dephosphorylation of heat shock factor protein 4 and a reduction in its DNA-binding activity. Inhibits MAP kinase p38 by dephosphorylating it and inhibits p38-mediated apoptosis in anaplastic thyroid cancer cells. Can also induce activation of MAP kinase p38 and c-Jun N-terminal kinase (JNK). The polypeptide is Dual specificity protein phosphatase 26 (DUSP26) (Homo sapiens (Human)).